An 86-amino-acid chain; its full sequence is MPSDLEKPTIIYPCVWDYRVIMTTNDTSVLKELLETYQRPFKLELKNTSKNAKFYSFNVSMEVSNEAERNEIFQKISQLEVVAHAL.

To C.jejuni CJ0253.

This is an uncharacterized protein from Helicobacter pylori (strain J99 / ATCC 700824) (Campylobacter pylori J99).